The chain runs to 388 residues: Succinate--CoA ligase [ADP-forming] subunit beta (388 aa).

In terms of domain architecture, ATP-grasp spans 9-244 (KQIFAQYGLP…PSQEDAREAA (236 aa)). Residues Lys46, 53-55 (GRG), Glu99, Ala102, and Glu107 each bind ATP. Residues Asn199 and Asp213 each coordinate Mg(2+). Substrate is bound by residues Asn264 and 321-323 (GIV).

Belongs to the succinate/malate CoA ligase beta subunit family. As to quaternary structure, heterotetramer of two alpha and two beta subunits. Mg(2+) is required as a cofactor.

It carries out the reaction succinate + ATP + CoA = succinyl-CoA + ADP + phosphate. The catalysed reaction is GTP + succinate + CoA = succinyl-CoA + GDP + phosphate. It participates in carbohydrate metabolism; tricarboxylic acid cycle; succinate from succinyl-CoA (ligase route): step 1/1. In terms of biological role, succinyl-CoA synthetase functions in the citric acid cycle (TCA), coupling the hydrolysis of succinyl-CoA to the synthesis of either ATP or GTP and thus represents the only step of substrate-level phosphorylation in the TCA. The beta subunit provides nucleotide specificity of the enzyme and binds the substrate succinate, while the binding sites for coenzyme A and phosphate are found in the alpha subunit. The sequence is that of Succinate--CoA ligase [ADP-forming] subunit beta from Mannheimia succiniciproducens (strain KCTC 0769BP / MBEL55E).